Reading from the N-terminus, the 404-residue chain is MSNQSLSSKILGGNLVLRIAVGLVLGICLALVSPDAAKSVGVLGQFFVKSLRAIAPILVFVLVMASIANKEVGSDSRLKPILVMYVLGTFVAAVTAVILSYLFPTTLELVTSPEGLAPPQGVGEVLKTVVFNLVDNPLGAITNGNFIGILAWSIGLGIALRHAAPSTKVMLNDISDAVSFVVKVVIAFAPIGVFGLVAETMATNGADAFIGYARLLAVLLGAMAIVAFILNPLLVYWKIRRNPYPLTITCLRESGVTAFFTRSSAANIPVNMGLAKRLGIKEEIYSIAIPLGANINMAGAAITITVLTLAAAYTQGIVPDFSTAVLLSIVASICACGASGVAGGSLLLIPLACSLFNIPNDVAAQVIGVGFIIGVIQDSAETALNSSTDVLFTAAVSMSDEKNN.

Helical transmembrane passes span 10–30 (ILGG…ICLA), 53–73 (AIAP…KEVG), 81–101 (ILVM…ILSY), 140–160 (AITN…GIAL), 177–197 (AVSF…FGLV), 215–235 (LLAV…PLLV), 287–307 (IAIP…ITVL), and 329–349 (IVAS…LLLI).

This sequence belongs to the dicarboxylate/amino acid:cation symporter (DAACS) (TC 2.A.23) family.

The protein resides in the cell inner membrane. The enzyme catalyses L-serine(in) + Na(+)(in) = L-serine(out) + Na(+)(out). The catalysed reaction is L-threonine(in) + Na(+)(in) = L-threonine(out) + Na(+)(out). Involved in the import of serine and threonine into the cell, with the concomitant import of sodium (symport system). The polypeptide is Serine/threonine transporter SstT (Glaesserella parasuis serovar 5 (strain SH0165) (Haemophilus parasuis)).